A 146-amino-acid chain; its full sequence is Cytochrome c' (146 aa).

The N-terminal stretch at 1 to 21 is a signal peptide; the sequence is MKLRIATIAGLVVLGSGFAVA. The heme c site is built by Arg-29, Thr-86, Ala-87, Cys-134, Cys-137, and His-138.

Monomer. In terms of processing, binds 1 heme c group covalently per subunit.

Its function is as follows. Cytochrome c' is the most widely occurring bacterial c-type cytochrome. Cytochromes c' are high-spin proteins and the heme has no sixth ligand. Their exact function is not known. The sequence is that of Cytochrome c' (cycA) from Rhodopseudomonas palustris (strain ATCC BAA-98 / CGA009).